The chain runs to 130 residues: MYRALTKDIEVVVEPFYLEEQSDPEDDRYVWGYRIVISNNSAIAVRLVNRYWNITDQNGQVDEVTGPGVVGEQPRLSPGDTYEYSSGCPLDTPSGLMFGHYQMETDEGEMFDVDIPAFSLDSPGLLRVLN.

Residues 3–127 (RALTKDIEVV…FSLDSPGLLR (125 aa)) form the ApaG domain.

This Rhizobium leguminosarum bv. trifolii (strain WSM2304) protein is Protein ApaG.